We begin with the raw amino-acid sequence, 230 residues long: MVVFGYEAGTKPRDSGVVPVGTEEAPKVFKMAASMHGQPSPSLEDAKLRRPMVIEIIEKNFDYLRKEMTQNIYQMATFGTTAGFSGIFSNFLFRRCFKVKHDALKTYASLATLPFLSTVVTDKLFVIDALYSDNISKENCVFRSSLIGIVCGVFYPSSLAFTKNGRLATKYHTVPLPPKGRVLIHWMTLCQTQMKLMAIPLVFQIMFGILNGLYHYAVFEETLEKTIHEE.

The residue at position 34 (S34) is a Phosphoserine. Helical transmembrane passes span 72-92 (IYQMATFGTTAGFSGIFSNFL), 110-130 (LATLPFLSTVVTDKLFVIDAL), 141-161 (VFRSSLIGIVCGVFYPSSLAF), and 199-219 (IPLVFQIMFGILNGLYHYAVF).

It belongs to the TMEM126 family. As to quaternary structure, part of the mitochondrial complex I assembly/MCIA complex that comprises at least the core subunits TMEM126B, NDUFAF1, ECSIT and ACAD9 and complement subunits such as COA1 and TMEM186. Associates with the intermediate 370 kDa subcomplex of incompletely assembled complex I. Interacts with TMEM70.

The protein localises to the mitochondrion membrane. Its function is as follows. As part of the MCIA complex, involved in the assembly of the mitochondrial complex I. Participates in constructing the membrane arm of complex I. This Homo sapiens (Human) protein is Complex I assembly factor TMEM126B, mitochondrial.